The sequence spans 499 residues: Probable lipid II flippase MurJ (499 aa).

14 consecutive transmembrane segments (helical) span residues 4-24 (LFRA…FGYV), 26-46 (DATV…FIAF), 88-108 (LLIT…EEII), 130-150 (FTIL…ILLV), 154-174 (FFVP…SLVI), 184-204 (LALA…FLLF), 227-247 (FLFT…DTFL), 265-285 (IYLL…LALV), 297-317 (TALK…FFLS), 335-355 (LFYT…YSLQ), 375-395 (AFLS…LLNF), 396-416 (GVYS…VYLY), 425-445 (IPFG…GLVY), and 455-475 (FILV…LIIL).

The protein belongs to the MurJ/MviN family.

The protein resides in the cell inner membrane. Its pathway is cell wall biogenesis; peptidoglycan biosynthesis. Functionally, involved in peptidoglycan biosynthesis. Transports lipid-linked peptidoglycan precursors from the inner to the outer leaflet of the cytoplasmic membrane. The chain is Probable lipid II flippase MurJ from Aquifex aeolicus (strain VF5).